The sequence spans 75 residues: Small ribosomal subunit protein bS16 (75 aa).

The protein belongs to the bacterial ribosomal protein bS16 family.

The protein is Small ribosomal subunit protein bS16 of Campylobacter hominis (strain ATCC BAA-381 / DSM 21671 / CCUG 45161 / LMG 19568 / NCTC 13146 / CH001A).